The sequence spans 259 residues: Uridylate kinase (259 aa).

Residue K21 to G24 participates in ATP binding. G63 contacts UMP. Positions 64 and 68 each coordinate ATP. UMP-binding positions include D83 and T144–T151. Positions 171, 177, and 180 each coordinate ATP.

This sequence belongs to the UMP kinase family. Homohexamer.

It localises to the cytoplasm. The catalysed reaction is UMP + ATP = UDP + ADP. Its pathway is pyrimidine metabolism; CTP biosynthesis via de novo pathway; UDP from UMP (UMPK route): step 1/1. Inhibited by UTP. Its function is as follows. Catalyzes the reversible phosphorylation of UMP to UDP. This Salinibacter ruber (strain DSM 13855 / M31) protein is Uridylate kinase.